The primary structure comprises 637 residues: ATP-dependent zinc metalloprotease FtsH (637 aa).

The Cytoplasmic portion of the chain corresponds to 1–6 (MNNQGR). Residues 7 to 27 (SILAWAALFIFVILLFNVFQS) form a helical membrane-spanning segment. Over 28 to 103 (DGLLGVRNNI…VVPLETRMNT (76 aa)) the chain is Periplasmic. Residues 104–124 (FLGFLISWFPMLLLIGVWVFF) form a helical membrane-spanning segment. Residues 125–637 (MRQMHGGGKA…TKAQKENIAS (513 aa)) lie on the Cytoplasmic side of the membrane. ATP is bound at residue 195 to 202 (GPPGTGKT). His-417 lines the Zn(2+) pocket. Residue Glu-418 is part of the active site. Positions 421 and 495 each coordinate Zn(2+). Residues 617–637 (DKEKLHEKTKTTKAQKENIAS) are disordered.

The protein in the central section; belongs to the AAA ATPase family. In the C-terminal section; belongs to the peptidase M41 family. Homohexamer. Requires Zn(2+) as cofactor.

It is found in the cell inner membrane. Acts as a processive, ATP-dependent zinc metallopeptidase for both cytoplasmic and membrane proteins. Plays a role in the quality control of integral membrane proteins. In Rickettsia typhi (strain ATCC VR-144 / Wilmington), this protein is ATP-dependent zinc metalloprotease FtsH.